A 535-amino-acid chain; its full sequence is Large neutral amino acids transporter small subunit 2 (535 aa).

Residues 1–17 (MEEGARHRNNTEKKHPG) show a composition bias toward basic and acidic residues. Residues 1–30 (MEEGARHRNNTEKKHPGGGESDASPEAGSG) are disordered. Over 1 to 44 (MEEGARHRNNTEKKHPGGGESDASPEAGSGGGGVALKKEIGLVS) the chain is Cytoplasmic. Serine 29 carries the phosphoserine modification. Residues 45–65 (ACGIIVGNIIGSGIFVSPKGV) form a helical membrane-spanning segment. An L-leucine-binding site is contributed by isoleucine 53. Over 66–73 (LENAGSVG) the chain is Extracellular. Residues 74 to 95 (LALIVWIVTGFITVVGALCYAE) form a helical membrane-spanning segment. At 96-116 (LGVTIPKSGGDYSYVKDIFGG) the chain is on the cytoplasmic side. Residues 117-149 (LAGFLRLWIAVLVIYPTNQAVIALTFSNYVLQP) traverse the membrane as a helical segment. Asparagine 134 provides a ligand contact to L-tryptophan. The Extracellular portion of the chain corresponds to 150 to 157 (LFPTCFPP). The helical transmembrane segment at 158 to 178 (ESGLRLLAAICLLLLTWVNCS) threads the bilayer. Topologically, residues 179–181 (SVR) are cytoplasmic. The helical transmembrane segment at 182–210 (WATRVQDIFTAGKLLALALIIIMGIVQIC) threads the bilayer. The Extracellular segment spans residues 211 to 230 (KGEYFWLEPKNAFENFQEPD). The chain crosses the membrane as a helical span at residues 231–252 (IGLVALAFLQGSFAYGGWNFLN). Glycine 246 serves as a coordination point for L-leucine. At 253–265 (YVTEELVDPYKNL) the chain is on the cytoplasmic side. A helical membrane pass occupies residues 266–287 (PRAIFISIPLVTFVYVFANVAY). At 288-312 (VTAMSPQELLASNAVAVTFGEKLLG) the chain is on the extracellular side. The helical transmembrane segment at 313 to 338 (VMAWIMPISVALSTFGGVNGSLFTSS) threads the bilayer. Over 339–364 (RLFFAGAREGHLPSVLAMIHVKRCTP) the chain is Cytoplasmic. The chain crosses the membrane as a helical span at residues 365–382 (IPALLFTCISTLLMLVTS). Residues 383–386 (DMYT) lie on the Extracellular side of the membrane. A helical transmembrane segment spans residues 387–408 (LINYVGFINYLFYGVTVAGQIV). Asparagine 395 provides a ligand contact to L-tryptophan. The Cytoplasmic segment spans residues 409–423 (LRWKKPDIPRPIKIN). Transmembrane regions (helical) follow at residues 424–446 (LLFPIIYLLFWAFLLVFSLWSEP) and 447–466 (VVCGIGLAIMLTGVPVYFLG). The Cytoplasmic segment spans residues 467–535 (VYWQHKPKCF…DKDVAGQPQP (69 aa)). Positions 502–535 (SGTEEANEDMEEQQQPMYQPTPTKDKDVAGQPQP) are disordered. A compositionally biased stretch (polar residues) spans 514–523 (QQQPMYQPTP).

The protein belongs to the amino acid-polyamine-organocation (APC) superfamily. L-type amino acid transporter (LAT) (TC 2.A.3.8) family. As to quaternary structure, disulfide-linked heterodimer composed of the catalytic light chain subunit SLC7A8 and the heavy chain subunit SLC3A2. SLC3A2 acts as chaperones for correct plasma membrane trafficking and stabilization of SLC7A8 and modulates the substrate affinity and specificity of SLC7A8. ICAM-1 associates with the heterodimer SLC3A2/SLC7A8; this interaction regulates SLC7A8 activity. Strongest expression is observed in kidney and moderate expression in placenta and brain, followed by liver, prostate, testis, ovary, lymph node, thymus, spleen, skeletal muscle and heart. Also expressed in fetal liver as well as in the retinal pigment epithelial cell line ARPE-19 and the intestinal epithelial cell line Caco-2.

Its subcellular location is the cell membrane. The protein localises to the basolateral cell membrane. It catalyses the reaction L-histidine(in) + L-phenylalanine(out) = L-histidine(out) + L-phenylalanine(in). It carries out the reaction L-tryptophan(in) + L-phenylalanine(out) = L-tryptophan(out) + L-phenylalanine(in). The enzyme catalyses L-isoleucine(in) + L-phenylalanine(out) = L-isoleucine(out) + L-phenylalanine(in). The catalysed reaction is L-valine(in) + L-phenylalanine(out) = L-valine(out) + L-phenylalanine(in). It catalyses the reaction L-leucine(in) + L-phenylalanine(out) = L-leucine(out) + L-phenylalanine(in). It carries out the reaction L-glutamine(in) + L-phenylalanine(out) = L-glutamine(out) + L-phenylalanine(in). The enzyme catalyses L-cysteine(in) + L-phenylalanine(out) = L-cysteine(out) + L-phenylalanine(in). The catalysed reaction is L-phenylalanine(out) + L-methionine(in) = L-phenylalanine(in) + L-methionine(out). It catalyses the reaction L-leucine(out) + L-methionine(in) = L-leucine(in) + L-methionine(out). It carries out the reaction L-cysteine(out) + L-methionine(in) = L-cysteine(in) + L-methionine(out). The enzyme catalyses S-methylmercury-L-cysteine(out) + L-methionine(in) = S-methylmercury-L-cysteine(in) + L-methionine(out). The catalysed reaction is S-methylmercury-L-cysteine(in) + L-leucine(out) = S-methylmercury-L-cysteine(out) + L-leucine(in). It catalyses the reaction S-methylmercury-L-cysteine(in) + L-phenylalanine(out) = S-methylmercury-L-cysteine(out) + L-phenylalanine(in). It carries out the reaction L-phenylalanine(out) + L-serine(in) = L-phenylalanine(in) + L-serine(out). The enzyme catalyses L-phenylalanine(out) + glycine(in) = L-phenylalanine(in) + glycine(out). The catalysed reaction is L-phenylalanine(out) + L-alanine(in) = L-phenylalanine(in) + L-alanine(out). It catalyses the reaction 3,3'-diiodo-L-thyronine(out) = 3,3'-diiodo-L-thyronine(in). It carries out the reaction 3,3',5-triiodo-L-thyronine(out) = 3,3',5-triiodo-L-thyronine(in). The enzyme catalyses L-dopa(out) + L-phenylalanine(in) = L-dopa(in) + L-phenylalanine(out). With respect to regulation, inhibited by the L-type inhibitor 2-Aminobicyclo-(2,2,1)-heptane-2-carboxylic acid (BCH). In terms of biological role, associates with SLC3A2 to form a functional heterodimeric complex that translocates small and large neutral amino acids with broad specificity and a stoichiometry of 1:1. Functions as amino acid antiporter mediating the influx of extracellular essential amino acids mainly in exchange with the efflux of highly concentrated intracellular amino acids. Has relatively symmetrical selectivities but strongly asymmetrical substrate affinities at both the intracellular and extracellular sides of the transporter. This asymmetry allows SLC7A8 to regulate intracellular amino acid pools (mM concentrations) by exchange with external amino acids (uM concentration range), equilibrating the relative concentrations of different amino acids across the plasma membrane instead of mediating their net uptake. May play an essential role in the reabsorption of neutral amino acids from the epithelial cells to the bloodstream in the kidney. Involved in the uptake of methylmercury (MeHg) when administered as the L-cysteine or D,L-homocysteine complexes, and hence plays a role in metal ion homeostasis and toxicity. Involved in the cellular activity of small molecular weight nitrosothiols, via the stereoselective transport of L-nitrosocysteine (L-CNSO) across the transmembrane. Imports the thyroid hormone diiodothyronine (T2) and to a smaller extent triiodothyronine (T3) but not rT 3 or thyroxine (T4). Mediates the uptake of L-DOPA. May participate in auditory function. The polypeptide is Large neutral amino acids transporter small subunit 2 (Homo sapiens (Human)).